Reading from the N-terminus, the 165-residue chain is UPF0303 protein Bphy_1660 (165 aa).

The protein belongs to the UPF0303 family.

The polypeptide is UPF0303 protein Bphy_1660 (Paraburkholderia phymatum (strain DSM 17167 / CIP 108236 / LMG 21445 / STM815) (Burkholderia phymatum)).